We begin with the raw amino-acid sequence, 872 residues long: DNA mismatch repair protein MutS (872 aa).

602–609 (GPNMSGKS) provides a ligand contact to ATP.

The protein belongs to the DNA mismatch repair MutS family.

In terms of biological role, this protein is involved in the repair of mismatches in DNA. It is possible that it carries out the mismatch recognition step. This protein has a weak ATPase activity. This Staphylococcus aureus (strain MRSA252) protein is DNA mismatch repair protein MutS.